The chain runs to 394 residues: Elongation factor Tu (394 aa).

One can recognise a tr-type G domain in the interval K10 to T204. Residues G19 to T26 form a G1 region. Residue G19–T26 participates in GTP binding. Residue T26 participates in Mg(2+) binding. The segment at G60–N64 is G2. A G3 region spans residues D81 to G84. GTP is bound by residues D81–H85 and N136–D139. Residues N136 to D139 form a G4 region. A G5 region spans residues S174–L176.

This sequence belongs to the TRAFAC class translation factor GTPase superfamily. Classic translation factor GTPase family. EF-Tu/EF-1A subfamily. As to quaternary structure, monomer.

Its subcellular location is the cytoplasm. It catalyses the reaction GTP + H2O = GDP + phosphate + H(+). Functionally, GTP hydrolase that promotes the GTP-dependent binding of aminoacyl-tRNA to the A-site of ribosomes during protein biosynthesis. The chain is Elongation factor Tu from Malacoplasma penetrans (strain HF-2) (Mycoplasma penetrans).